A 222-amino-acid polypeptide reads, in one-letter code: Eukaryotic translation initiation factor 3 subunit K (222 aa).

The 163-residue stretch at 46-208 (YDLEANLAVL…KIKTKNITEK (163 aa)) folds into the PCI domain.

This sequence belongs to the eIF-3 subunit K family. In terms of assembly, component of the eukaryotic translation initiation factor 3 (eIF-3) complex. The eIF-3 complex interacts with pix.

It localises to the cytoplasm. Component of the eukaryotic translation initiation factor 3 (eIF-3) complex, which is involved in protein synthesis of a specialized repertoire of mRNAs and, together with other initiation factors, stimulates binding of mRNA and methionyl-tRNAi to the 40S ribosome. The eIF-3 complex specifically targets and initiates translation of a subset of mRNAs involved in cell proliferation. The polypeptide is Eukaryotic translation initiation factor 3 subunit K (Drosophila yakuba (Fruit fly)).